Reading from the N-terminus, the 339-residue chain is MACPIRVAVTQAEPVYLDLAASVKKACGLIAEAAQNGAKLVAFSECWLPGYPAWIWARPVDFELQTRYIYNSLPIESEAMELVKATAKEHSIAVALGFSEQSPSHSIYISQAIISPQGEVVMHRRKIKPTHMERTLFGDGSGADLNNVVEVDFGAEHGKIKVGCFACWEHTQPLLKYHSISQGEAIHISMWPPIDPSAGVDHPGLWSMTADGCQNLSQTYAIESTAYVLHSTSVCTQKGIETLKTQDGLSCRQPGGGHSCVIGPDGRRLTAPLGDGSPDAEGIVYADLDLTKVVATRGFLDIVGHYSRPDLLWLGVDREQKENIIAKQHKAAEQEAVQG.

A CN hydrolase domain is found at I5 to L290. Residue E45 is the Proton acceptor of the active site. K126 is an active-site residue. C167 serves as the catalytic Nucleophile.

This sequence belongs to the carbon-nitrogen hydrolase superfamily. Nitrilase family.

The enzyme catalyses a nitrile + 2 H2O = a carboxylate + NH4(+). It catalyses the reaction 4-chlorophenylacetonitrile + 2 H2O = 4-chlorophenylacetate + NH4(+). Nitrilase that hydrolyzes preferentially phenylacetonitrile, (R,S)-mandelonitrile, and 3-indolylacetonitrile. This is Arylacetonitrilase from Fusarium vanettenii (strain ATCC MYA-4622 / CBS 123669 / FGSC 9596 / NRRL 45880 / 77-13-4) (Fusarium solani subsp. pisi).